The following is a 489-amino-acid chain: Beta-galactosidase (489 aa).

Residue lysine 116 is modified to N6-methyllysine; partial. Position 135 is an N6-methyllysine (lysine 135). Glutamate 206 acts as the Proton donor in catalysis. An N6-methyllysine; partial mark is found at lysine 273 and lysine 311. Position 332 is an N6-methyllysine (lysine 332). Residue glutamate 387 is the Nucleophile of the active site.

In terms of assembly, homotetramer.

The catalysed reaction is Hydrolysis of terminal non-reducing beta-D-galactose residues in beta-D-galactosides.. The polypeptide is Beta-galactosidase (lacS) (Saccharolobus solfataricus (strain ATCC 35092 / DSM 1617 / JCM 11322 / P2) (Sulfolobus solfataricus)).